Consider the following 485-residue polypeptide: MVAMEKKTKLVEEEDGCYYYDYGGYGDGVVDDEGRATELRPMALSRPHTQAFHLAWMSLFACFFAAFAAPPILPAMRPALVLAPSDASAAAVASLSATLVGRLAMGPACDLLGPRRASGVASLVCALALALAAVFASSPAGFVALRFVAGLSLANFVANQHWMSRIFAPSAVGLANAVAAGWANVGSAAAQVVMPVAYDAVVLRLGVPVTVAWRVTYLLPCAMLVTTGLAVLAFPYDLPGGGGGRCPGGGGGRRRSFWAVVRGGVGDYRAWLLGLTYGHCYGVELIMENVAADFFRRRFRLPMEAAGAAAACFGAMNAVARPAGGVASDEVARRFGMRGRLWALWAVQSAGAALCVLVGRMGAAEAPSLAATVAVMVACAAFVQAASGLTFGIVPFVCKRSLGVVSGMTASGGAVGAIVTNRLFFSGSRYTVEEAISCTGITSLLCTLPVALIHFRRQGGMFCGPSATIDGDGDVDDDDDYMLLK.

The next 12 membrane-spanning stretches (helical) occupy residues 56-76 (WMSL…LPAM), 80-100 (LVLA…ATLV), 119-139 (GVAS…ASSP), 147-167 (FVAG…SRIF), 177-197 (AVAA…MPVA), 215-235 (VTYL…LAFP), 270-290 (AWLL…MENV), 305-327 (AAGA…GGVA), 341-361 (LWAL…VGRM), 377-397 (VACA…VPFV), 405-425 (VSGM…RLFF), and 435-455 (AISC…LIHF).

Belongs to the major facilitator superfamily. Nitrate/nitrite porter (TC 2.A.1.8) family. Expressed in the base of the lateral root primordia, root-shoot junction zone, leaves, ends of the husk and vascular tissue of the anthers.

It is found in the cell membrane. In terms of biological role, involved in nitrate transport. This Oryza sativa subsp. japonica (Rice) protein is Probable high-affinity nitrate transporter 2.4 (NRT2.4).